We begin with the raw amino-acid sequence, 458 residues long: Ribosomal protein uS12 methylthiotransferase RimO (458 aa).

The MTTase N-terminal domain occupies 6 to 116; it reads PKVGFVSLGC…VMEAVHAALP (111 aa). Positions 15, 51, 80, 147, 151, and 154 each coordinate [4Fe-4S] cluster. Residues 133-371 enclose the Radical SAM core domain; it reads LTPRHYAYLK…AKQAQISALR (239 aa). The TRAM domain occupies 373-441; sequence ESKIGSVQQC…EHDLFGDALP (69 aa).

This sequence belongs to the methylthiotransferase family. RimO subfamily. It depends on [4Fe-4S] cluster as a cofactor.

It is found in the cytoplasm. The catalysed reaction is L-aspartate(89)-[ribosomal protein uS12]-hydrogen + (sulfur carrier)-SH + AH2 + 2 S-adenosyl-L-methionine = 3-methylsulfanyl-L-aspartate(89)-[ribosomal protein uS12]-hydrogen + (sulfur carrier)-H + 5'-deoxyadenosine + L-methionine + A + S-adenosyl-L-homocysteine + 2 H(+). In terms of biological role, catalyzes the methylthiolation of an aspartic acid residue of ribosomal protein uS12. The polypeptide is Ribosomal protein uS12 methylthiotransferase RimO (Xanthomonas euvesicatoria pv. vesicatoria (strain 85-10) (Xanthomonas campestris pv. vesicatoria)).